Here is a 577-residue protein sequence, read N- to C-terminus: BICD family-like cargo adapter 1 (577 aa).

The disordered stretch occupies residues 63–100 (LLAAGERSSEPGEHPQAEPESPVEGHGPPLPPPPTQDP). Positions 69-79 (RSSEPGEHPQA) are enriched in basic and acidic residues. Positions 116 to 120 (AARLG) match the CC1 box motif. A coiled-coil region spans residues 121–379 (KALLERNQDM…QLWEAYCQVR (259 aa)). The interval 389 to 415 (DSADSAVSTDSSMDESSETSSAKDVPA) is disordered. Positions 390-399 (SADSAVSTDS) are enriched in low complexity. Positions 443–528 (LSVEMTALKE…LEAWQDDMHR (86 aa)) form a coiled coil.

This sequence belongs to the BICDR family. As to quaternary structure, part of a tripartite complex with dynein and dynactin, acts an adapter linking the dynein motor complex and dynactin. Interacts with KIF1C. Interacts with RAB6A and RAB6B; interaction is specific to Rab6. In terms of tissue distribution, highly expressed during early embryonic development. Predominantly expressed in kidney, undifferentiated neural tissue and developing eye.

It localises to the cytoplasm. Its subcellular location is the cytoskeleton. It is found in the microtubule organizing center. The protein resides in the centrosome. Acts as an adapter protein linking the dynein motor complex to various cargos and converts dynein from a non-processive to a highly processive motor in the presence of dynactin. Facilitates the interaction between dynein and dynactin and activates dynein processivity (the ability to move along a microtubule for a long distance without falling off the track). Predominantly recruits 2 dyneins, which increases both the force and speed of the microtubule motor. Component of secretory vesicle machinery in developing neurons that acts as a regulator of neurite outgrowth. Regulates the secretory vesicle transport by controlling the accumulation of Rab6-containing secretory vesicles in the pericentrosomal region restricting anterograde secretory transport during the early phase of neuronal differentiation, thereby inhibiting neuritogenesis. In Mus musculus (Mouse), this protein is BICD family-like cargo adapter 1 (Bicdl1).